Reading from the N-terminus, the 91-residue chain is Alpha-defensin-related sequence 10 (91 aa).

Positions Met1–Ala19 are cleaved as a signal peptide. Residues Asp20–Cys65 constitute a propeptide that is removed on maturation. Positions Ser21–Ser52 are disordered. 7 tandem repeats follow at residues Cys65–Pro67, Cys68–Ser70, Cys71–Ser73, Cys74–Trp76, Cys77–Met79, Cys80–Arg82, and Cys83–Ser85. The 7 X 3 AA tandem repeats of C-P-X stretch occupies residues Cys65–Ser85.

This sequence belongs to the alpha-defensin family. Paneth cells of the small bowel.

It localises to the secreted. Apparent precursor of a secreted, cationic, proline- and cysteine-rich peptide that contains Cys-Pro-Xaa repeats. Unlike cryptdin, the proposed mature peptide region lacks the structural motif characteristic of defensins. It may have microbicidal activities. This is Alpha-defensin-related sequence 10 (Defa-rs10) from Mus musculus (Mouse).